The chain runs to 134 residues: uncharacterized protein (134 aa).

Residues 1 to 16 (MAKAVALLLAAIAASA) form the signal peptide.

This is an uncharacterized protein from Oryza sativa subsp. indica (Rice).